A 437-amino-acid polypeptide reads, in one-letter code: tRNA modification GTPase MnmE (437 aa).

(6S)-5-formyl-5,6,7,8-tetrahydrofolate contacts are provided by R21, E79, and R119. A TrmE-type G domain is found at 223-364; that stretch reads GFRVVLAGPP…FRSALIAHAR (142 aa). Residues 233-238, 252-258, and 277-280 contribute to the GTP site; these read NAGKST, AAEPGTT, and DTAG. Mg(2+) is bound by residues S237 and T258. Position 437 (K437) interacts with (6S)-5-formyl-5,6,7,8-tetrahydrofolate.

It belongs to the TRAFAC class TrmE-Era-EngA-EngB-Septin-like GTPase superfamily. TrmE GTPase family. As to quaternary structure, homodimer. Heterotetramer of two MnmE and two MnmG subunits. It depends on K(+) as a cofactor.

It is found in the cytoplasm. Exhibits a very high intrinsic GTPase hydrolysis rate. Involved in the addition of a carboxymethylaminomethyl (cmnm) group at the wobble position (U34) of certain tRNAs, forming tRNA-cmnm(5)s(2)U34. The chain is tRNA modification GTPase MnmE from Novosphingobium aromaticivorans (strain ATCC 700278 / DSM 12444 / CCUG 56034 / CIP 105152 / NBRC 16084 / F199).